The chain runs to 386 residues: Succinate--CoA ligase [ADP-forming] subunit beta (386 aa).

The region spanning 9–244 (KEILRKYGVP…HDEEDPLETR (236 aa)) is the ATP-grasp domain. Residues Lys-46, 53-55 (GRG), Glu-99, Cys-102, and Glu-107 contribute to the ATP site. Mg(2+) contacts are provided by Asn-199 and Asp-213. Residues Asn-264 and 321 to 323 (GIM) each bind substrate.

It belongs to the succinate/malate CoA ligase beta subunit family. In terms of assembly, heterotetramer of two alpha and two beta subunits. The cofactor is Mg(2+).

The catalysed reaction is succinate + ATP + CoA = succinyl-CoA + ADP + phosphate. It carries out the reaction GTP + succinate + CoA = succinyl-CoA + GDP + phosphate. It functions in the pathway carbohydrate metabolism; tricarboxylic acid cycle; succinate from succinyl-CoA (ligase route): step 1/1. Its function is as follows. Succinyl-CoA synthetase functions in the citric acid cycle (TCA), coupling the hydrolysis of succinyl-CoA to the synthesis of either ATP or GTP and thus represents the only step of substrate-level phosphorylation in the TCA. The beta subunit provides nucleotide specificity of the enzyme and binds the substrate succinate, while the binding sites for coenzyme A and phosphate are found in the alpha subunit. The sequence is that of Succinate--CoA ligase [ADP-forming] subunit beta from Rickettsia typhi (strain ATCC VR-144 / Wilmington).